Here is a 331-residue protein sequence, read N- to C-terminus: L-lactate dehydrogenase A chain (331 aa).

Residues 29–57 and arginine 98 contribute to the NAD(+) site; that span reads GMVGMASAISILLKDLCDELAMVDVMEDK. Residues arginine 105, asparagine 137, and arginine 168 each contribute to the substrate site. An NAD(+)-binding site is contributed by asparagine 137. Catalysis depends on histidine 192, which acts as the Proton acceptor. Threonine 247 serves as a coordination point for substrate.

It belongs to the LDH/MDH superfamily. LDH family. Homotetramer.

The protein localises to the cytoplasm. It carries out the reaction (S)-lactate + NAD(+) = pyruvate + NADH + H(+). It participates in fermentation; pyruvate fermentation to lactate; (S)-lactate from pyruvate: step 1/1. In terms of biological role, interconverts simultaneously and stereospecifically pyruvate and lactate with concomitant interconversion of NADH and NAD(+). This chain is L-lactate dehydrogenase A chain (ldha), found in Notothenia angustata (Rockcod).